The following is a 217-amino-acid chain: 3,4-dihydroxy-2-butanone 4-phosphate synthase (217 aa).

D-ribulose 5-phosphate is bound by residues Arg-37–Glu-38, Asp-42, Arg-150–Thr-154, and Glu-174. Residue Glu-38 coordinates Mg(2+). His-153 contributes to the Mg(2+) binding site.

Belongs to the DHBP synthase family. In terms of assembly, homodimer. Mg(2+) is required as a cofactor. It depends on Mn(2+) as a cofactor.

The enzyme catalyses D-ribulose 5-phosphate = (2S)-2-hydroxy-3-oxobutyl phosphate + formate + H(+). Its pathway is cofactor biosynthesis; riboflavin biosynthesis; 2-hydroxy-3-oxobutyl phosphate from D-ribulose 5-phosphate: step 1/1. Its function is as follows. Catalyzes the conversion of D-ribulose 5-phosphate to formate and 3,4-dihydroxy-2-butanone 4-phosphate. The polypeptide is 3,4-dihydroxy-2-butanone 4-phosphate synthase (Escherichia coli O17:K52:H18 (strain UMN026 / ExPEC)).